The chain runs to 298 residues: ER-bound oxygenase mpaB (298 aa).

Residues 1–24 (MDKGTSFFTTPSFSATTRAIFNTM) lie on the Lumenal side of the membrane. A helical transmembrane segment spans residues 25–45 (PQWFSFAVGLLIAYPLLINSL). The Cytoplasmic segment spans residues 46–298 (RYRRLKQLQK…RLRKAMLYVE (253 aa)).

The protein belongs to the mpaB oxygenase family.

The protein localises to the endoplasmic reticulum membrane. It carries out the reaction 4-farnesyl-3,5-dihydroxy-6-methylphthalide + AH2 + 2 O2 = (4E,8E)-10-(4,6-dihydroxy-7-methyl-3-oxo-1,3-dihydro-2-benzofuran-5-yl)-4,8-dimethyldeca-4,8-dienoate + acetone + A + H2O + H(+). It functions in the pathway secondary metabolite biosynthesis; terpenoid biosynthesis. ER-bound oxygenase; part of the gene cluster that mediates the biosynthesis of mycophenolic acid (MPA), the first isolated antibiotic natural product in the world obtained from a culture of Penicillium brevicompactum in 1893. MpaB catalyzes the oxidative cleavage the C19-C20 double bond in farnesyl-DHMP (FDHMP) to yield FDHMP-3C via a mycophenolic aldehyde intermediate. The first step of the pathway is the synthesis of 5-methylorsellinic acid (5MOA) by the cytosolic polyketide synthase mpaC. 5MOA is then converted to the phthalide compound 5,7-dihydroxy-4,6-dimethylphthalide (DHMP) by the endoplasmic reticulum-bound cytochrome P450 monooxygenase mpaDE. MpaDE first catalyzes hydroxylation of 5-MOA to 4,6-dihydroxy-2-(hydroxymethyl)-3-methylbenzoic acid (DHMB). MpaDE then acts as a lactone synthase that catalyzes the ring closure to convert DHMB into DHMP. The next step is the prenylation of DHMP by the Golgi apparatus-associated prenyltransferase mpaA to yield farnesyl-DHMP (FDHMP). The ER-bound oxygenase mpaB then mediates the oxidative cleavage the C19-C20 double bond in FDHMP to yield FDHMP-3C via a mycophenolic aldehyde intermediate. The O-methyltransferase mpaG catalyzes the methylation of FDHMP-3C to yield MFDHMP-3C. After the cytosolic methylation of FDHMP-3C, MFDHMP-3C enters into peroxisomes probably via free diffusion due to its low molecular weight. Upon a peroxisomal CoA ligation reaction, catalyzed by a beta-oxidation component enzyme acyl-CoA ligase ACL891, MFDHMP-3C-CoA would then be restricted to peroxisomes for the following beta-oxidation pathway steps. The peroxisomal beta-oxidation machinery than converts MFDHMP-3C-CoA into MPA_CoA, via a beta-oxidation chain-shortening process. Finally mpaH acts as a peroxisomal acyl-CoA hydrolase with high substrate specificity toward MPA-CoA to release the final product MPA. The polypeptide is ER-bound oxygenase mpaB (Penicillium roqueforti (strain FM164)).